We begin with the raw amino-acid sequence, 56 residues long: Ribosome biogenesis protein Nop10 (56 aa).

This sequence belongs to the NOP10 family.

Involved in ribosome biogenesis; more specifically in 18S rRNA pseudouridylation and in cleavage of pre-rRNA. The sequence is that of Ribosome biogenesis protein Nop10 from Saccharolobus islandicus (strain Y.N.15.51 / Yellowstone #2) (Sulfolobus islandicus).